The following is a 476-amino-acid chain: Ribulose bisphosphate carboxylase/oxygenase activase 1, chloroplastic (476 aa).

The N-terminal 56 residues, 1–56, are a transit peptide targeting the chloroplast; the sequence is MAAAYSTVGAVNRAPLSLNGSGARASLVPSTAFFGSSLKKSAAKFPKASSGNFKIV. 165–172 is a binding site for ATP; it reads GGKGQGKS.

The protein belongs to the RuBisCO activase family.

The protein localises to the plastid. It is found in the chloroplast stroma. In terms of biological role, activation of RuBisCO (ribulose-1,5-bisphosphate carboxylase/oxygenase; EC 4.1.1.39) involves the ATP-dependent carboxylation of the epsilon-amino group of lysine leading to a carbamate structure. The polypeptide is Ribulose bisphosphate carboxylase/oxygenase activase 1, chloroplastic (RCA1) (Larrea tridentata (Creosote bush)).